We begin with the raw amino-acid sequence, 427 residues long: Histidine--tRNA ligase (427 aa).

It belongs to the class-II aminoacyl-tRNA synthetase family. As to quaternary structure, homodimer.

It localises to the cytoplasm. It carries out the reaction tRNA(His) + L-histidine + ATP = L-histidyl-tRNA(His) + AMP + diphosphate + H(+). This Chloroherpeton thalassium (strain ATCC 35110 / GB-78) protein is Histidine--tRNA ligase.